The primary structure comprises 261 residues: Transmembrane and immunoglobulin domain-containing protein 1 (261 aa).

Residues 1 to 27 (MAQKTSGLIQRCRFLLLMILFLPHVMT) form the signal peptide. Residues 28 to 114 (SSVLSVNGKT…LQRNQSVSIS (87 aa)) enclose the Ig-like C2-type 1 domain. At 28–219 (SSVLSVNGKT…IVKDKGSTVP (192 aa)) the chain is on the extracellular side. A disulfide bond links cysteine 54 and cysteine 103. Residues asparagine 83, asparagine 108, asparagine 118, and asparagine 189 are each glycosylated (N-linked (GlcNAc...) asparagine). Residues 122–208 (PPLLSGNDFQ…LIETKTKDFH (87 aa)) enclose the Ig-like C2-type 2 domain. Cysteines 143 and 194 form a disulfide. The helical transmembrane segment at 220 to 240 (IEPIIAACVVVFLTLVFGVIA) threads the bilayer. Over 241 to 261 (RRKRIMKLCRKDQGPQCRTAL) the chain is Cytoplasmic.

Homodimer. In terms of processing, N-glycosylated.

The protein localises to the cell membrane. It is found in the cytoplasm. Functionally, may control cell-cell adhesion, cell migration and proliferation, cell morphology, and protects renal epithelial cells from oxidative cell injury to promote cell survival. This chain is Transmembrane and immunoglobulin domain-containing protein 1, found in Bos taurus (Bovine).